A 756-amino-acid polypeptide reads, in one-letter code: ATP-dependent zinc metalloprotease FtsH (756 aa).

The Cytoplasmic segment spans residues 1–44; sequence MGVPAGMPHPNGLQPQRKDKALAQNPNTPQKGSEAFLKKLIHSS. The chain crosses the membrane as a helical span at residues 45-65; that stretch reads WFFPGAAIVVMLGFLMASFFT. The Extracellular segment spans residues 66-148; the sequence is QPSRQVDTNV…SYTDQPVEHS (83 aa). Residues 149 to 169 form a helical membrane-spanning segment; that stretch reads FLGSLVSLLLPILLFGVLFWF. The Cytoplasmic portion of the chain corresponds to 170 to 756; it reads LMGRVGGGSS…NQNGAENERG (587 aa). An ATP-binding site is contributed by 241–248; it reads GPPGTGKT. H463 lines the Zn(2+) pocket. E464 is a catalytic residue. H467 and D539 together coordinate Zn(2+). Composition is skewed to basic and acidic residues over residues 647–662 and 672–681; these read PERE…ERTD and LAKEAEKSEE. Residues 647–756 are disordered; it reads PEREHWYSKP…NQNGAENERG (110 aa). 2 stretches are compositionally biased toward low complexity: residues 684–703 and 713–724; these read AEAP…VPVA and PLTDPDADPTVA. A compositionally biased stretch (polar residues) spans 744–756; it reads GTPNQNGAENERG.

The protein in the central section; belongs to the AAA ATPase family. In the C-terminal section; belongs to the peptidase M41 family. Homohexamer. Zn(2+) serves as cofactor.

The protein resides in the cell membrane. In terms of biological role, acts as a processive, ATP-dependent zinc metallopeptidase for both cytoplasmic and membrane proteins. Plays a role in the quality control of integral membrane proteins. This chain is ATP-dependent zinc metalloprotease FtsH, found in Rothia mucilaginosa (strain DY-18) (Stomatococcus mucilaginosus).